Reading from the N-terminus, the 363-residue chain is UDP-N-acetylglucosamine--N-acetylmuramyl-(pentapeptide) pyrophosphoryl-undecaprenol N-acetylglucosamine transferase (363 aa).

Residues 14 to 16, Asn-122, Arg-163, Ser-190, and Gln-285 each bind UDP-N-acetyl-alpha-D-glucosamine; that span reads TGG.

It belongs to the glycosyltransferase 28 family. MurG subfamily.

Its subcellular location is the cell inner membrane. It catalyses the reaction di-trans,octa-cis-undecaprenyl diphospho-N-acetyl-alpha-D-muramoyl-L-alanyl-D-glutamyl-meso-2,6-diaminopimeloyl-D-alanyl-D-alanine + UDP-N-acetyl-alpha-D-glucosamine = di-trans,octa-cis-undecaprenyl diphospho-[N-acetyl-alpha-D-glucosaminyl-(1-&gt;4)]-N-acetyl-alpha-D-muramoyl-L-alanyl-D-glutamyl-meso-2,6-diaminopimeloyl-D-alanyl-D-alanine + UDP + H(+). The protein operates within cell wall biogenesis; peptidoglycan biosynthesis. Functionally, cell wall formation. Catalyzes the transfer of a GlcNAc subunit on undecaprenyl-pyrophosphoryl-MurNAc-pentapeptide (lipid intermediate I) to form undecaprenyl-pyrophosphoryl-MurNAc-(pentapeptide)GlcNAc (lipid intermediate II). The chain is UDP-N-acetylglucosamine--N-acetylmuramyl-(pentapeptide) pyrophosphoryl-undecaprenol N-acetylglucosamine transferase from Prochlorococcus marinus (strain AS9601).